A 228-amino-acid polypeptide reads, in one-letter code: Transcription repressor OFP8 (228 aa).

Low complexity-rich tracts occupy residues 1–14 (MSGRSSRRGSFSLR), 54–79 (ASSTSTTTAFTATTGGAGTATSTDSS), and 92–101 (EEPAAAQQEQ). 2 disordered regions span residues 1–21 (MSGRSSRRGSFSLRQPPVVDI) and 36–143 (SSSS…QLQE). The segment covering 107–120 (RRRRRQQRRRRRRA) has biased composition (basic residues). The OVATE domain maps to 157–216 (VAVESAEPYEDFRESMVQMVVEKEIYAWDDLNDLLHQFLSLNSPRHHPLILHAFADLWTR).

Interacts with GSK2. In terms of processing, phosphorylated on serine and threonine residues by GSK2. Dephosphorylated during response to brassinosteroid. In terms of tissue distribution, expressed in roots, stems, stem nodes, young leaves, leaf sheaths, lamina joints, young spikelets, inflorescences, stamens and ovaries, embryos and seeds.

The protein localises to the nucleus. The protein resides in the cytoplasm. Functionally, probable transcriptional repressor that regulates multiple aspects of plant growth and development, partly through brassinosteroid (BR) signaling pathway. Acts downstream of the kinase GSK2, a negative regulator of BR signaling. The protein is Transcription repressor OFP8 of Oryza sativa subsp. japonica (Rice).